A 306-amino-acid polypeptide reads, in one-letter code: D-alanine--D-alanine ligase B (306 aa).

Active-site residues include Glu-15 and Ser-150. The ATP-grasp domain occupies Lys-101 to Glu-303. Ile-134 to Thr-189 serves as a coordination point for ATP. 3 residues coordinate Mg(2+): Asp-257, Glu-270, and Asn-272. Ser-281 is an active-site residue.

Belongs to the D-alanine--D-alanine ligase family. As to quaternary structure, monomer. Mg(2+) is required as a cofactor. The cofactor is Mn(2+).

The protein localises to the cytoplasm. The catalysed reaction is 2 D-alanine + ATP = D-alanyl-D-alanine + ADP + phosphate + H(+). It participates in cell wall biogenesis; peptidoglycan biosynthesis. Functionally, cell wall formation. This chain is D-alanine--D-alanine ligase B, found in Escherichia coli O6:H1 (strain CFT073 / ATCC 700928 / UPEC).